The sequence spans 274 residues: Putative homeobox protein Meis3-like 1 (274 aa).

Residues 12 to 65 (GGDVCSSDSFNEDNTAFAKQVRSERPFFSSNPELDNLMIQAIQVLRFHLLELEK) enclose the MEIS N-terminal domain. Disordered stretches follow at residues 108–167 (DSGS…KRGI) and 228–248 (NRTGQGAAFSPEGQPIGGYTE). Over residues 123 to 135 (GLASQSGDNSSDQ) the composition is skewed to polar residues. A DNA-binding region (homeobox) is located at residues 161 to 223 (RNKKRGIFPK…NARRRIVQPM (63 aa)).

It belongs to the TALE/MEIS homeobox family.

The protein resides in the nucleus. This is Putative homeobox protein Meis3-like 1 (MEIS3P1) from Homo sapiens (Human).